The primary structure comprises 486 residues: Kynurenine 3-monooxygenase (486 aa).

The next 2 membrane-spanning stretches (helical) occupy residues 401–424 (LLFWMMPNTWVPLYNSVSFSHMRY) and 437–459 (ILTRVLYGASIASVAAIGGLCYR).

Belongs to the aromatic-ring hydroxylase family. KMO subfamily. Requires FAD as cofactor.

Its subcellular location is the mitochondrion. It is found in the membrane. The enzyme catalyses L-kynurenine + NADPH + O2 + H(+) = 3-hydroxy-L-kynurenine + NADP(+) + H2O. The protein operates within cofactor biosynthesis; NAD(+) biosynthesis; quinolinate from L-kynurenine: step 1/3. In terms of biological role, catalyzes the hydroxylation of L-kynurenine (L-Kyn) to form 3-hydroxy-L-kynurenine (L-3OHKyn). Required for synthesis of quinolinic acid. The polypeptide is Kynurenine 3-monooxygenase (kh) (Anopheles gambiae (African malaria mosquito)).